The following is a 394-amino-acid chain: Ceramide synthase 4 (394 aa).

Over 1–31 (MLSSFNEWFWQDRFWLPPNVTWTELEDRDGR) the chain is Lumenal. An N-linked (GlcNAc...) asparagine glycan is attached at Asn19. A helical membrane pass occupies residues 32 to 52 (VYPHPQDLLAALPLALVLLAM). The interval 67-128 (WLGVRDQTRR…RRRRNQDRPQ (62 aa)) is homeobox-like. In terms of domain architecture, TLC spans 131–332 (KKFCEASWRF…ILRMLYSFMK (202 aa)). A run of 4 helical transmembrane segments spans residues 140 to 160 (FLFYLSSFVGGLSVLYHESWL), 179 to 199 (LYWWYLLELGFYLSLLIRLPF), 209 to 229 (QVIHHFVAVILMTFSYSANLL), and 260 to 280 (VCDALFLIFSFVFFYTRLVLF). Residues 291 to 301 (ESISNRGPFFG) carry the Last loop motif motif. A helical transmembrane segment spans residues 304-324 (FFNGLLMLLQLLHVFWSCLIL). At 325–394 (RMLYSFMKKG…RLTNRHTTAT (70 aa)) the chain is on the cytoplasmic side. The interval 341–394 (RSDVEESDSSEEAAAAQEPLQLKNGAAGGPRPAPTDGPRSRVAGRLTNRHTTAT) is disordered. Residues Ser342, Ser349, and Ser350 each carry the phosphoserine modification.

Phosphorylated at the C-terminus by CK2. In terms of processing, N-glycosylated.

It localises to the endoplasmic reticulum membrane. The enzyme catalyses sphinganine + octadecanoyl-CoA = N-(octadecanoyl)-sphinganine + CoA + H(+). It catalyses the reaction eicosanoyl-CoA + sphinganine = N-eicosanoylsphinganine + CoA + H(+). The catalysed reaction is docosanoyl-CoA + sphinganine = N-docosanoylsphinganine + CoA + H(+). It carries out the reaction tetracosanoyl-CoA + sphinganine = N-tetracosanoylsphinganine + CoA + H(+). The enzyme catalyses hexacosanoyl-CoA + sphinganine = N-hexacosanoylsphinganine + CoA + H(+). It catalyses the reaction a fatty acyl-CoA + sphing-4-enine = an N-acylsphing-4-enine + CoA + H(+). The catalysed reaction is sphing-4-enine + octadecanoyl-CoA = N-octadecanoylsphing-4-enine + CoA + H(+). It carries out the reaction hexadecasphinganine + octadecanoyl-CoA = N-octadecanoylhexadecasphinganine + CoA + H(+). It participates in lipid metabolism; sphingolipid metabolism. In terms of biological role, ceramide synthase that catalyzes formation of ceramide from sphinganine and acyl-CoA substrates, with high selectivity toward long and very-long chains (C18:0-C22:0) as acyl donor. The protein is Ceramide synthase 4 of Homo sapiens (Human).